We begin with the raw amino-acid sequence, 523 residues long: Probable 3-ketoacyl-CoA synthase 20 (523 aa).

2 helical membrane-spanning segments follow: residues 31 to 55 (IVAV…AAGG) and 78 to 96 (ALAV…YAAS). The FAE domain occupies 93–382 (YAASRPRPVY…RFLATVVLKR (290 aa)). Active-site residues include Cys-237, His-317, His-401, His-405, and Asn-438.

Belongs to the thiolase-like superfamily. Chalcone/stilbene synthases family. As to expression, highly expressed in leaf sheaths. Expressed in leaves, flag leaves and panicles.

It is found in the membrane. It catalyses the reaction a very-long-chain acyl-CoA + malonyl-CoA + H(+) = a very-long-chain 3-oxoacyl-CoA + CO2 + CoA. Contributes to fatty acids elongation. Plays a role in controlling leaf anatomy and plant architecture. This is Probable 3-ketoacyl-CoA synthase 20 from Oryza sativa subsp. japonica (Rice).